We begin with the raw amino-acid sequence, 378 residues long: MANEPAIGAIDRLQRSSRDVTTLPAVISRWLSSVLPGGAAPEVTVESGVDSTGMSSETIILTARWQQDGRSIQQKLVARVAPAAEDVPVFPTYRLDHQFEVIRLVGELTDVPVPRVRWIETTGDVLGTPFFLMDYVEGVVPPDVMPYTFGDNWFADAPAERQRQLQDATVAALATLHSIPNAQNTFSFLTQGRTSDTTLHRHFNWVRSWYDFAVEGIGRSPLLERTFEWLQSHWPDDAAAREPVLLWGDARVGNVLYRDFQPVAVLDWEMVALGPRELDVAWMIFAHRVFQELAGLATLPGLPEVMREDDVRATYQALTGVELGDLHWFYVYSGVMWACVFMRTGARRVHFGEIEKPDDVESLFYHAGLMKHLLGEEH.

ATP contacts are provided by residues arginine 79 and 134–136 (DYV). Aspartate 249 (proton acceptor) is an active-site residue. Asparagine 254, aspartate 267, and glutamate 269 together coordinate Mg(2+).

It belongs to the aminoglycoside phosphotransferase family.

In terms of biological role, might catalyze the phosphorylation of aminoglycosides and confer aminoglycoside antibiotics resistance. In Mycobacterium tuberculosis (strain CDC 1551 / Oshkosh), this protein is Putative aminoglycoside phosphotransferase.